Here is a 361-residue protein sequence, read N- to C-terminus: Alcohol dehydrogenase 9 (361 aa).

The Zn(2+) site is built by Cys-51, Thr-53, His-73, Cys-104, Cys-107, Cys-110, Cys-118, and Cys-167. An alcohol-binding residues include Thr-53 and His-73. Residue Thr-53 participates in NAD(+) binding. Residues 192 to 197 (GLGGLG), Lys-221, 278 to 280 (LGA), and Lys-356 contribute to the NAD(+) site.

This sequence belongs to the zinc-containing alcohol dehydrogenase family. Class-III subfamily. Homodimer. Requires Zn(2+) as cofactor.

The protein is Alcohol dehydrogenase 9 of Catharanthus roseus (Madagascar periwinkle).